Reading from the N-terminus, the 435-residue chain is UPF0761 membrane protein mma_2179 (435 aa).

Helical transmembrane passes span 45–65 (VLAL…FPLF), 103–123 (LSAF…LMID), 142–162 (ILVY…SMTF), 177–197 (VPFV…MVAF), 208–228 (LVEW…FEIV), and 252–272 (FPIF…GAVV).

The protein belongs to the UPF0761 family.

The protein resides in the cell inner membrane. In Janthinobacterium sp. (strain Marseille) (Minibacterium massiliensis), this protein is UPF0761 membrane protein mma_2179.